Reading from the N-terminus, the 219-residue chain is Proteasome subunit beta type-9 (219 aa).

The propeptide at 1-20 (MLRAGAPTAGSFRTEEVHTG) is removed in mature form. Thr21 functions as the Nucleophile in the catalytic mechanism. 2 positions are modified to N6-acetyllysine: Lys53 and Lys109.

Belongs to the peptidase T1B family. In terms of assembly, the 26S proteasome consists of a 20S proteasome core and two 19S regulatory subunits. The 20S proteasome core is composed of 28 subunits that are arranged in four stacked rings, resulting in a barrel-shaped structure. The two end rings are each formed by seven alpha subunits, and the two central rings are each formed by seven beta subunits. The catalytic chamber with the active sites is on the inside of the barrel. Component of the immunoproteasome, where it displaces the equivalent housekeeping subunit PSMB6. Component of the spermatoproteasome, a form of the proteasome specifically found in testis. Autocleaved. The resulting N-terminal Thr residue of the mature subunit is responsible for the nucleophile proteolytic activity.

It localises to the cytoplasm. It is found in the nucleus. It catalyses the reaction Cleavage of peptide bonds with very broad specificity.. In terms of biological role, the proteasome is a multicatalytic proteinase complex which is characterized by its ability to cleave peptides with Arg, Phe, Tyr, Leu, and Glu adjacent to the leaving group at neutral or slightly basic pH. The proteasome has an ATP-dependent proteolytic activity. This subunit is involved in antigen processing to generate class I binding peptides. In Mus terricolor (Earth-colored mouse), this protein is Proteasome subunit beta type-9 (Psmb9).